The sequence spans 573 residues: Sulfite reductase [NADPH] hemoprotein beta-component (573 aa).

Cys-436, Cys-442, Cys-481, and Cys-485 together coordinate [4Fe-4S] cluster. Cys-485 contributes to the siroheme binding site.

Belongs to the nitrite and sulfite reductase 4Fe-4S domain family. As to quaternary structure, alpha(8)-beta(8). The alpha component is a flavoprotein, the beta component is a hemoprotein. Siroheme serves as cofactor. [4Fe-4S] cluster is required as a cofactor.

The enzyme catalyses hydrogen sulfide + 3 NADP(+) + 3 H2O = sulfite + 3 NADPH + 4 H(+). It functions in the pathway sulfur metabolism; hydrogen sulfide biosynthesis; hydrogen sulfide from sulfite (NADPH route): step 1/1. Functionally, component of the sulfite reductase complex that catalyzes the 6-electron reduction of sulfite to sulfide. This is one of several activities required for the biosynthesis of L-cysteine from sulfate. The protein is Sulfite reductase [NADPH] hemoprotein beta-component of Alteromonas mediterranea (strain DSM 17117 / CIP 110805 / LMG 28347 / Deep ecotype).